Consider the following 638-residue polypeptide: Chaperone protein HtpG (638 aa).

An a; substrate-binding region spans residues methionine 1 to arginine 343. The segment at glutamate 344–lysine 557 is b. Positions isoleucine 558–alanine 638 are c.

This sequence belongs to the heat shock protein 90 family. Homodimer.

Its subcellular location is the cytoplasm. Functionally, molecular chaperone. Has ATPase activity. The protein is Chaperone protein HtpG of Nitrobacter hamburgensis (strain DSM 10229 / NCIMB 13809 / X14).